Reading from the N-terminus, the 198-residue chain is ATP-dependent Clp protease proteolytic subunit (198 aa).

The Nucleophile role is filled by Ser98. The active site involves His123.

Belongs to the peptidase S14 family. Fourteen ClpP subunits assemble into 2 heptameric rings which stack back to back to give a disk-like structure with a central cavity, resembling the structure of eukaryotic proteasomes.

Its subcellular location is the cytoplasm. It carries out the reaction Hydrolysis of proteins to small peptides in the presence of ATP and magnesium. alpha-casein is the usual test substrate. In the absence of ATP, only oligopeptides shorter than five residues are hydrolyzed (such as succinyl-Leu-Tyr-|-NHMec, and Leu-Tyr-Leu-|-Tyr-Trp, in which cleavage of the -Tyr-|-Leu- and -Tyr-|-Trp bonds also occurs).. In terms of biological role, cleaves peptides in various proteins in a process that requires ATP hydrolysis. Has a chymotrypsin-like activity. Plays a major role in the degradation of misfolded proteins. This is ATP-dependent Clp protease proteolytic subunit from Ehrlichia ruminantium (strain Gardel).